The following is a 281-amino-acid chain: Elongation factor 1-delta (281 aa).

Ala-2 bears the N-acetylalanine mark. Lys-17 is subject to N6-acetyllysine. 4 positions are modified to phosphoserine: Ser-37, Glu-40, Ser-44, and Ser-60. Thr-73 carries the phosphothreonine modification. The tract at residues 80-115 (LVVRIASLEVENQSLRGVVQELQQAISKLEARLNVL) is leucine-zipper. Residues Ser-86, Asn-91, Leu-94, and Ser-106 each carry the phosphoserine modification. Lys-107 carries the N6-acetyllysine modification. An N6-acetyllysine; alternate modification is found at Lys-117. N6-succinyllysine; alternate is present on Lys-117. The tract at residues 118–172 (SSPGHRATAPQTQHVSPMRQVEPPAKKPATPAEDDEDDDIDLFGSDNEEEDKEAA) is disordered. At Ser-119 the chain carries Phosphoserine. Residue Thr-129 is modified to Phosphothreonine. A Phosphoserine modification is found at Ser-133. Thr-147 bears the Phosphothreonine mark. The span at 149–169 (AEDDEDDDIDLFGSDNEEEDK) shows a compositional bias: acidic residues. A Phosphoserine; by CK2 modification is found at Ser-162. Positions 173–281 (QLREERLRQY…SVDIAAFNKI (109 aa)) are catalytic (GEF).

This sequence belongs to the EF-1-beta/EF-1-delta family. EF-1 is composed of 4 subunits: alpha, beta, delta isoform 1, and gamma. Isoform 2 interacts with HSF1 and NFE2L2. In terms of tissue distribution, isoform 2 is specifically expressed in brain, cerebellum and testis.

It is found in the nucleus. Its function is as follows. EF-1-beta and EF-1-delta stimulate the exchange of GDP bound to EF-1-alpha to GTP, regenerating EF-1-alpha for another round of transfer of aminoacyl-tRNAs to the ribosome. In terms of biological role, regulates induction of heat-shock-responsive genes through association with heat shock transcription factors and direct DNA-binding at heat shock promoter elements (HSE). In Homo sapiens (Human), this protein is Elongation factor 1-delta (EEF1D).